A 188-amino-acid polypeptide reads, in one-letter code: dCTP deaminase (188 aa).

DCTP contacts are provided by residues 111-116 (KSTYAR), 135-137 (TLE), Q156, Y170, and Q180. The active-site Proton donor/acceptor is the E137.

The protein belongs to the dCTP deaminase family. In terms of assembly, homotrimer.

It catalyses the reaction dCTP + H2O + H(+) = dUTP + NH4(+). Its pathway is pyrimidine metabolism; dUMP biosynthesis; dUMP from dCTP (dUTP route): step 1/2. Catalyzes the deamination of dCTP to dUTP. In Herminiimonas arsenicoxydans, this protein is dCTP deaminase.